We begin with the raw amino-acid sequence, 330 residues long: Probable allantoicase (330 aa).

Belongs to the allantoicase family.

The catalysed reaction is allantoate + H2O = (S)-ureidoglycolate + urea. The protein operates within nitrogen metabolism; (S)-allantoin degradation; (S)-ureidoglycolate from allantoate (aminidohydrolase route): step 1/1. This is Probable allantoicase from Photobacterium profundum (strain SS9).